Reading from the N-terminus, the 219-residue chain is Flagellar transcriptional regulator FlhC (219 aa).

4 residues coordinate Zn(2+): cysteine 137, cysteine 140, cysteine 157, and cysteine 160.

Belongs to the FlhC family. In terms of assembly, heterohexamer composed of two FlhC and four FlhD subunits. Each FlhC binds a FlhD dimer, forming a heterotrimer, and a hexamer assembles by dimerization of two heterotrimers. Requires Zn(2+) as cofactor.

It localises to the cytoplasm. Functionally, functions in complex with FlhD as a master transcriptional regulator that regulates transcription of several flagellar and non-flagellar operons by binding to their promoter region. Activates expression of class 2 flagellar genes, including fliA, which is a flagellum-specific sigma factor that turns on the class 3 genes. Also regulates genes whose products function in a variety of physiological pathways. The protein is Flagellar transcriptional regulator FlhC of Paraburkholderia phymatum (strain DSM 17167 / CIP 108236 / LMG 21445 / STM815) (Burkholderia phymatum).